The sequence spans 39 residues: Cytochrome b559 subunit beta (39 aa).

Residues 14–30 (WLTVHGLAVPTVSFLGS) traverse the membrane as a helical segment. Position 18 (histidine 18) interacts with heme.

This sequence belongs to the PsbE/PsbF family. In terms of assembly, heterodimer of an alpha subunit and a beta subunit. PSII is composed of 1 copy each of membrane proteins PsbA, PsbB, PsbC, PsbD, PsbE, PsbF, PsbH, PsbI, PsbJ, PsbK, PsbL, PsbM, PsbT, PsbX, PsbY, PsbZ, Psb30/Ycf12, at least 3 peripheral proteins of the oxygen-evolving complex and a large number of cofactors. It forms dimeric complexes. It depends on heme b as a cofactor.

It is found in the plastid. Its subcellular location is the chloroplast thylakoid membrane. Functionally, this b-type cytochrome is tightly associated with the reaction center of photosystem II (PSII). PSII is a light-driven water:plastoquinone oxidoreductase that uses light energy to abstract electrons from H(2)O, generating O(2) and a proton gradient subsequently used for ATP formation. It consists of a core antenna complex that captures photons, and an electron transfer chain that converts photonic excitation into a charge separation. This chain is Cytochrome b559 subunit beta, found in Lactuca sativa (Garden lettuce).